The primary structure comprises 114 residues: uncharacterized protein (114 aa).

Fe cation-binding residues include cysteine 40, cysteine 106, and cysteine 108.

It belongs to the HesB/IscA family. Ycf83 subfamily.

It localises to the plastid. It is found in the chloroplast. This is an uncharacterized protein from Pyropia yezoensis (Susabi-nori).